A 378-amino-acid chain; its full sequence is Queuine tRNA-ribosyltransferase (378 aa).

The active-site Proton acceptor is the aspartate 91. Substrate-binding positions include 91–95 (DSGGF), aspartate 145, glutamine 189, and glycine 216. Residues 247 to 253 (GVGKPED) form an RNA binding region. Catalysis depends on aspartate 266, which acts as the Nucleophile. An RNA binding; important for wobble base 34 recognition region spans residues 271–275 (TRNAR). Zn(2+)-binding residues include cysteine 304, cysteine 306, cysteine 309, and histidine 335.

Belongs to the queuine tRNA-ribosyltransferase family. Homodimer. Within each dimer, one monomer is responsible for RNA recognition and catalysis, while the other monomer binds to the replacement base PreQ1. The cofactor is Zn(2+).

The enzyme catalyses 7-aminomethyl-7-carbaguanine + guanosine(34) in tRNA = 7-aminomethyl-7-carbaguanosine(34) in tRNA + guanine. The protein operates within tRNA modification; tRNA-queuosine biosynthesis. Functionally, catalyzes the base-exchange of a guanine (G) residue with the queuine precursor 7-aminomethyl-7-deazaguanine (PreQ1) at position 34 (anticodon wobble position) in tRNAs with GU(N) anticodons (tRNA-Asp, -Asn, -His and -Tyr). Catalysis occurs through a double-displacement mechanism. The nucleophile active site attacks the C1' of nucleotide 34 to detach the guanine base from the RNA, forming a covalent enzyme-RNA intermediate. The proton acceptor active site deprotonates the incoming PreQ1, allowing a nucleophilic attack on the C1' of the ribose to form the product. After dissociation, two additional enzymatic reactions on the tRNA convert PreQ1 to queuine (Q), resulting in the hypermodified nucleoside queuosine (7-(((4,5-cis-dihydroxy-2-cyclopenten-1-yl)amino)methyl)-7-deazaguanosine). This Vibrio atlanticus (strain LGP32) (Vibrio splendidus (strain Mel32)) protein is Queuine tRNA-ribosyltransferase.